Consider the following 157-residue polypeptide: Endoribonuclease YbeY (157 aa).

The Zn(2+) site is built by His-122, His-126, and His-132.

This sequence belongs to the endoribonuclease YbeY family. It depends on Zn(2+) as a cofactor.

It localises to the cytoplasm. Single strand-specific metallo-endoribonuclease involved in late-stage 70S ribosome quality control and in maturation of the 3' terminus of the 16S rRNA. The sequence is that of Endoribonuclease YbeY from Bacillus subtilis (strain 168).